We begin with the raw amino-acid sequence, 494 residues long: 1-aminocyclopropane-1-carboxylate synthase 2 (494 aa).

Residue lysine 279 is modified to N6-(pyridoxal phosphate)lysine. Residues 474 to 494 (NVLNSPHTMSPHSPLVRARTY) form a disordered region. Residues 475–484 (VLNSPHTMSP) are compositionally biased toward polar residues.

It belongs to the class-I pyridoxal-phosphate-dependent aminotransferase family. In terms of assembly, homodimer. Pyridoxal 5'-phosphate is required as a cofactor.

It catalyses the reaction S-adenosyl-L-methionine = 1-aminocyclopropane-1-carboxylate + S-methyl-5'-thioadenosine + H(+). It functions in the pathway alkene biosynthesis; ethylene biosynthesis via S-adenosyl-L-methionine; ethylene from S-adenosyl-L-methionine: step 1/2. Its function is as follows. Catalyzes the formation of 1-aminocyclopropane-1-carboxylate, a direct precursor of ethylene in higher plants. This is 1-aminocyclopropane-1-carboxylate synthase 2 (ACS2) from Cucurbita pepo (Vegetable marrow).